Here is a 123-residue protein sequence, read N- to C-terminus: Small ribosomal subunit protein uS12 (123 aa).

Position 89 is a 3-methylthioaspartic acid (aspartate 89). The disordered stretch occupies residues 101-123 (SLDTAGVKDRKQSRSKYGAKRPK). Positions 113–123 (SRSKYGAKRPK) are enriched in basic residues.

The protein belongs to the universal ribosomal protein uS12 family. As to quaternary structure, part of the 30S ribosomal subunit. Contacts proteins S8 and S17. May interact with IF1 in the 30S initiation complex.

With S4 and S5 plays an important role in translational accuracy. Its function is as follows. Interacts with and stabilizes bases of the 16S rRNA that are involved in tRNA selection in the A site and with the mRNA backbone. Located at the interface of the 30S and 50S subunits, it traverses the body of the 30S subunit contacting proteins on the other side and probably holding the rRNA structure together. The combined cluster of proteins S8, S12 and S17 appears to hold together the shoulder and platform of the 30S subunit. The chain is Small ribosomal subunit protein uS12 from Laribacter hongkongensis (strain HLHK9).